Here is a 494-residue protein sequence, read N- to C-terminus: Bifunctional NAD(P)H-hydrate repair enzyme Nnr (494 aa).

The segment at Met-1–Asn-221 is NAD(P)H-hydrate epimerase. Residues Leu-17 to Gln-219 form the YjeF N-terminal domain. Positions Asn-65 to Asp-69 are NADPHX 1; for epimerase activity. Residues Asn-66 and Asp-129 each coordinate K(+). Positions Gly-133 to Val-139 are NADPHX 1; for epimerase activity. Asp-162 contacts (6S)-NADPHX. Position 165 (Ser-165) interacts with K(+). Residues Asp-229–Asn-494 form the YjeF C-terminal domain. An ADP-dependent (S)-NAD(P)H-hydrate dehydratase region spans residues Asp-229 to Asn-494. Gly-325 contributes to the (6S)-NADPHX binding site. An NADPHX 2; for dehydratase activity region spans residues His-371–Arg-377. ADP contacts are provided by residues Lys-408–Thr-412 and Asn-427–Gly-436. Residue Asp-437 coordinates (6S)-NADPHX.

This sequence in the N-terminal section; belongs to the NnrE/AIBP family. In the C-terminal section; belongs to the NnrD/CARKD family. The cofactor is K(+).

The catalysed reaction is (6S)-NADHX + ADP = AMP + phosphate + NADH + H(+). It catalyses the reaction (6S)-NADPHX + ADP = AMP + phosphate + NADPH + H(+). The enzyme catalyses (6R)-NADHX = (6S)-NADHX. It carries out the reaction (6R)-NADPHX = (6S)-NADPHX. Its function is as follows. Bifunctional enzyme that catalyzes the epimerization of the S- and R-forms of NAD(P)HX and the dehydration of the S-form of NAD(P)HX at the expense of ADP, which is converted to AMP. This allows the repair of both epimers of NAD(P)HX, a damaged form of NAD(P)H that is a result of enzymatic or heat-dependent hydration. This chain is Bifunctional NAD(P)H-hydrate repair enzyme Nnr (nnr), found in Vibrio cholerae serotype O1 (strain ATCC 39315 / El Tor Inaba N16961).